The primary structure comprises 254 residues: Alcohol dehydrogenase (254 aa).

Phe10–Leu33 contributes to the NAD(+) binding site. Substrate is bound at residue Ser138. Residue Tyr151 is the Proton acceptor of the active site.

Belongs to the short-chain dehydrogenases/reductases (SDR) family. Homodimer.

It catalyses the reaction a primary alcohol + NAD(+) = an aldehyde + NADH + H(+). The catalysed reaction is a secondary alcohol + NAD(+) = a ketone + NADH + H(+). This chain is Alcohol dehydrogenase (Adh), found in Drosophila affinidisjuncta (Fruit fly).